A 206-amino-acid chain; its full sequence is Large ribosomal subunit protein uL4 (206 aa).

The protein belongs to the universal ribosomal protein uL4 family. Part of the 50S ribosomal subunit.

Its function is as follows. One of the primary rRNA binding proteins, this protein initially binds near the 5'-end of the 23S rRNA. It is important during the early stages of 50S assembly. It makes multiple contacts with different domains of the 23S rRNA in the assembled 50S subunit and ribosome. In terms of biological role, forms part of the polypeptide exit tunnel. The sequence is that of Large ribosomal subunit protein uL4 from Nitrobacter winogradskyi (strain ATCC 25391 / DSM 10237 / CIP 104748 / NCIMB 11846 / Nb-255).